The following is a 501-amino-acid chain: Cell division control protein 24 (501 aa).

Interacts with dna2, pcn1 and rfc1.

The protein localises to the nucleus. It localises to the cytoplasm. Its function is as follows. Has a role in the progression of DNA replication and in the maintenance of genomic integrity. Acts during S phase, after initiation, where it is essential for completion. This Schizosaccharomyces pombe (strain 972 / ATCC 24843) (Fission yeast) protein is Cell division control protein 24 (cdc24).